A 485-amino-acid polypeptide reads, in one-letter code: NADH-quinone oxidoreductase subunit N (485 aa).

The next 14 membrane-spanning stretches (helical) occupy residues 8–28 (LIAL…MLCI), 35–55 (FINS…LWFV), 75–95 (FYTG…YAWL), 105–125 (FYLL…ANHL), 127–147 (ALFL…GYAF), 159–179 (YTLL…LVYA), 203–223 (LLAG…LVPF), 235–255 (PVPV…AVVM), 271–291 (LVLA…ALSQ), 303–323 (IAHL…TLAL), 326–346 (VGVY…VVSL), 371–393 (LLSS…LGFI), 406–426 (HLGW…FYYL), and 449–469 (ALTA…LLGL).

Belongs to the complex I subunit 2 family. In terms of assembly, NDH-1 is composed of 13 different subunits. Subunits NuoA, H, J, K, L, M, N constitute the membrane sector of the complex.

It is found in the cell inner membrane. It carries out the reaction a quinone + NADH + 5 H(+)(in) = a quinol + NAD(+) + 4 H(+)(out). In terms of biological role, NDH-1 shuttles electrons from NADH, via FMN and iron-sulfur (Fe-S) centers, to quinones in the respiratory chain. The immediate electron acceptor for the enzyme in this species is believed to be ubiquinone. Couples the redox reaction to proton translocation (for every two electrons transferred, four hydrogen ions are translocated across the cytoplasmic membrane), and thus conserves the redox energy in a proton gradient. This Sodalis glossinidius (strain morsitans) protein is NADH-quinone oxidoreductase subunit N.